The primary structure comprises 317 residues: DNA-directed RNA polymerase subunit alpha (317 aa).

The interval 1–234 is alpha N-terminal domain (alpha-NTD); sequence MKQFNKPEFG…SHFDVFTTLA (234 aa). The alpha C-terminal domain (alpha-CTD) stretch occupies residues 249–317; that stretch reads EEKELDKPVE…AALELTFKQN (69 aa).

It belongs to the RNA polymerase alpha chain family. Homodimer. The RNAP catalytic core consists of 2 alpha, 1 beta, 1 beta' and 1 omega subunit. When a sigma factor is associated with the core the holoenzyme is formed, which can initiate transcription.

It carries out the reaction RNA(n) + a ribonucleoside 5'-triphosphate = RNA(n+1) + diphosphate. Functionally, DNA-dependent RNA polymerase catalyzes the transcription of DNA into RNA using the four ribonucleoside triphosphates as substrates. In Mesoplasma florum (strain ATCC 33453 / NBRC 100688 / NCTC 11704 / L1) (Acholeplasma florum), this protein is DNA-directed RNA polymerase subunit alpha.